A 404-amino-acid chain; its full sequence is S-adenosylmethionine synthase (404 aa).

Residue His18 participates in ATP binding. Residue Asp20 participates in Mg(2+) binding. Glu46 contacts K(+). 2 residues coordinate L-methionine: Glu59 and Gln102. Residues 102 to 112 (QSPDIAQGVDT) are flexible loop. ATP contacts are provided by residues 177-179 (DGK), 249-250 (KF), Asp258, 264-265 (RK), Ala281, and Lys285. Asp258 lines the L-methionine pocket. Lys289 serves as a coordination point for L-methionine.

The protein belongs to the AdoMet synthase family. Homotetramer; dimer of dimers. Requires Mg(2+) as cofactor. K(+) serves as cofactor.

It localises to the cytoplasm. It carries out the reaction L-methionine + ATP + H2O = S-adenosyl-L-methionine + phosphate + diphosphate. Its pathway is amino-acid biosynthesis; S-adenosyl-L-methionine biosynthesis; S-adenosyl-L-methionine from L-methionine: step 1/1. Functionally, catalyzes the formation of S-adenosylmethionine (AdoMet) from methionine and ATP. The overall synthetic reaction is composed of two sequential steps, AdoMet formation and the subsequent tripolyphosphate hydrolysis which occurs prior to release of AdoMet from the enzyme. This chain is S-adenosylmethionine synthase, found in Nocardia farcinica (strain IFM 10152).